Here is a 697-residue protein sequence, read N- to C-terminus: MAGQAGQAAQRVAALRNEIEQHNVRYYVHDDPSVSDAEYDALMRELIQLETDHPELVTPESPTQRVGAAPLAAFGSVRHAVPMLSLGNAFDPDEVQAFDRRVGDTLRGAGLLRVDQQPEYFCELKLDGLAISLRYEDGVLVQAATRGDGQTGEDVTANVRTIRAVPLRLKGAAPRVLEVRGEVLMNRAEFDRLNRSQAARDEKVFVNPRNAAAGSLRQLDPRITAQRPLRFFAYSWGEVHGLPGRQTALFDEPAPGAREESTLPRDTHGAMLDWLAELGLPVNTRHNRRAVGAEGLLAFYEQVGRERPGLPYDIDGVVYKVNSLPAQKVLGFVARAPRFALAHKFPAEEATTRLLDIEVQVGRTGAITPVARLQPVFVGGVTVTNATLHNEDEVRRKDVRIGDTVTVRRAGDVIPEVVGPVPGKRPADAREFVMPVSCPVCGSAIERPEDEAIARCTGGLFCAAQRKQTLLHAAGRKALDIDGLGEKLIDQLVDSGRVKSLADLYSLNAFELAALERMGKKSADNLVAAIDRARTPSLGRLLFALGIRHVGETTARDVARHFGSIETIMDADEEALAGAPDVGPVVAGSIRRFFAEPHNREIIDLLKAQGVHPVPEAGPQGNTLAGKTFVLTGTMPNWTRDEATRHILAAGGKVSGSVSKKTAYVVAGEEAGSKLAKAQELGVTVLDEDGLKALLGV.

Residues 36–40, 85–86, and Glu123 contribute to the NAD(+) site; these read DAEYD and SL. Lys125 serves as the catalytic N6-AMP-lysine intermediate. Positions 146, 182, 320, and 344 each coordinate NAD(+). Zn(2+) is bound by residues Cys438, Cys441, Cys456, and Cys462. The BRCT domain maps to 619–697; it reads PQGNTLAGKT…EDGLKALLGV (79 aa).

This sequence belongs to the NAD-dependent DNA ligase family. LigA subfamily. Mg(2+) is required as a cofactor. Requires Mn(2+) as cofactor.

The catalysed reaction is NAD(+) + (deoxyribonucleotide)n-3'-hydroxyl + 5'-phospho-(deoxyribonucleotide)m = (deoxyribonucleotide)n+m + AMP + beta-nicotinamide D-nucleotide.. Its function is as follows. DNA ligase that catalyzes the formation of phosphodiester linkages between 5'-phosphoryl and 3'-hydroxyl groups in double-stranded DNA using NAD as a coenzyme and as the energy source for the reaction. It is essential for DNA replication and repair of damaged DNA. The sequence is that of DNA ligase from Bordetella petrii (strain ATCC BAA-461 / DSM 12804 / CCUG 43448).